We begin with the raw amino-acid sequence, 318 residues long: 4-diphosphocytidyl-2-C-methyl-D-erythritol kinase (318 aa).

Lysine 25 is a catalytic residue. 110 to 120 is a binding site for ATP; that stretch reads PVAGGMAGGSA. Aspartate 152 is an active-site residue.

Belongs to the GHMP kinase family. IspE subfamily.

It carries out the reaction 4-CDP-2-C-methyl-D-erythritol + ATP = 4-CDP-2-C-methyl-D-erythritol 2-phosphate + ADP + H(+). Its pathway is isoprenoid biosynthesis; isopentenyl diphosphate biosynthesis via DXP pathway; isopentenyl diphosphate from 1-deoxy-D-xylulose 5-phosphate: step 3/6. In terms of biological role, catalyzes the phosphorylation of the position 2 hydroxy group of 4-diphosphocytidyl-2C-methyl-D-erythritol. In Mycobacterium tuberculosis (strain ATCC 25177 / H37Ra), this protein is 4-diphosphocytidyl-2-C-methyl-D-erythritol kinase.